A 484-amino-acid polypeptide reads, in one-letter code: Adenylosuccinate synthetase, chloroplastic (484 aa).

The transit peptide at Met-1–Ser-44 directs the protein to the chloroplast. Residues Gly-71 to Lys-77 and Gly-99 to Thr-101 contribute to the GTP site. Residue Asp-72 is the Proton acceptor of the active site. 2 residues coordinate Mg(2+): Asp-72 and Gly-99. Residues Asp-72–Lys-75, Asn-97–His-100, Thr-189, Arg-203, Gln-283, Thr-298, and Arg-362 contribute to the IMP site. The Proton donor role is filled by His-100. Thr-358–Arg-364 is a substrate binding site. Residues Arg-364, Lys-390–Asp-392, and Gly-473–Gly-475 each bind GTP.

This sequence belongs to the adenylosuccinate synthetase family. In terms of assembly, homodimer. It depends on Mg(2+) as a cofactor.

The protein resides in the plastid. Its subcellular location is the chloroplast. It catalyses the reaction IMP + L-aspartate + GTP = N(6)-(1,2-dicarboxyethyl)-AMP + GDP + phosphate + 2 H(+). Its pathway is purine metabolism; AMP biosynthesis via de novo pathway; AMP from IMP: step 1/2. Functionally, plays an important role in the de novo pathway and in the salvage pathway of purine nucleotide biosynthesis. Catalyzes the first committed step in the biosynthesis of AMP from IMP. The chain is Adenylosuccinate synthetase, chloroplastic from Zea mays (Maize).